We begin with the raw amino-acid sequence, 140 residues long: Hemoglobin subunit beta (140 aa).

The 140-residue stretch at 1–140 (GGSDVSAFLA…VGEALAKGYH (140 aa)) folds into the Globin domain. Histidine 57 and histidine 86 together coordinate heme b.

It belongs to the globin family. As to quaternary structure, heterotetramer of either two alpha-B chains or two alpha-C chains and two beta chains.

Functionally, the beta chain is a component of adult hemoglobins B. And C. In Aquarana catesbeiana (American bullfrog), this protein is Hemoglobin subunit beta (HBB).